A 110-amino-acid chain; its full sequence is Insulin (110 aa).

The signal sequence occupies residues 1–24 (MALWMRLLPLLAFLILWEPSPAHA). Disulfide bonds link cysteine 31/cysteine 96, cysteine 43/cysteine 109, and cysteine 95/cysteine 100. Residues 57-87 (GVDDPQMPQLELGGSPGAGDLRALALEVARQ) constitute a propeptide, c peptide.

The protein belongs to the insulin family. In terms of assembly, heterodimer of a B chain and an A chain linked by two disulfide bonds.

It localises to the secreted. Its function is as follows. Insulin decreases blood glucose concentration. It increases cell permeability to monosaccharides, amino acids and fatty acids. It accelerates glycolysis, the pentose phosphate cycle, and glycogen synthesis in liver. This Psammomys obesus (Fat sand rat) protein is Insulin (INS).